We begin with the raw amino-acid sequence, 403 residues long: Conserved oligomeric Golgi complex subunit 5 (403 aa).

The protein belongs to the COG5 family. Component of the conserved oligomeric Golgi (COG or Sec34/Sec35) complex which consists of eight different proteins COG1-COG8.

Its subcellular location is the golgi apparatus membrane. Functionally, acts as a component of the peripheral membrane COG complex that is involved in intra-Golgi protein trafficking. COG is located at the cis-Golgi, and regulates tethering of retrograde intra-Golgi vesicles and possibly a number of other membrane trafficking events. The chain is Conserved oligomeric Golgi complex subunit 5 (COG5) from Saccharomyces cerevisiae (strain ATCC 204508 / S288c) (Baker's yeast).